The primary structure comprises 457 residues: MQKYISEARLLLALAIPVILAQIAQTAMGFVDTVMAGGYSATDMAAVAIGTSIWLPAILFGHGLLLALTPVIAQLNGSGRRERIAHQVRQGFWLAGFVSVLIMLVLWNAGYIIRYMENIDPALADKAVGYLRALLWGAPGYLFFQVARNQCEGLAKTKPGMVMGFIGLLVNIPVNYIFIYGHFGMPELGGVGCGVATAAVYWVMFLAMVSYIKRARSMRDIRNEKGTAKPEPAVMKRLIQLGLPIALALFFEVTLFAVVALLVSPLGIVDVAGHQIALNFSSLMFVLPMSLAAAVTIRVGYRLGQGSTLDAQTAARTGLMVGVCMATLTAIFTVSLREQIALLYNDNPEVVTLAAHLMLLAAVYQISDSIQVIGSGILRGYKDTRSIFYITFTAYWVLGLPSGYILALTDLVVEPMGPAGFWIGFIIGLTSAAIMMMLRMRFLQRMPSAIILQRASR.

Topologically, residues 1 to 10 are cytoplasmic; that stretch reads MQKYISEARL. The chain crosses the membrane as a helical span at residues 11-31; it reads LLALAIPVILAQIAQTAMGFV. The Extracellular segment spans residues 32-52; that stretch reads DTVMAGGYSATDMAAVAIGTS. Residues 53–73 traverse the membrane as a helical segment; it reads IWLPAILFGHGLLLALTPVIA. Topologically, residues 74–92 are cytoplasmic; sequence QLNGSGRRERIAHQVRQGF. The chain crosses the membrane as a helical span at residues 93–113; that stretch reads WLAGFVSVLIMLVLWNAGYII. The Extracellular segment spans residues 114 to 126; sequence RYMENIDPALADK. A helical membrane pass occupies residues 127 to 147; sequence AVGYLRALLWGAPGYLFFQVA. At 148 to 159 the chain is on the cytoplasmic side; it reads RNQCEGLAKTKP. Residues 160–180 traverse the membrane as a helical segment; it reads GMVMGFIGLLVNIPVNYIFIY. Topologically, residues 181 to 188 are extracellular; sequence GHFGMPEL. A helical membrane pass occupies residues 189–209; the sequence is GGVGCGVATAAVYWVMFLAMV. The Cytoplasmic segment spans residues 210–242; sequence SYIKRARSMRDIRNEKGTAKPEPAVMKRLIQLG. The chain crosses the membrane as a helical span at residues 243-263; it reads LPIALALFFEVTLFAVVALLV. Residues 264-275 are Extracellular-facing; the sequence is SPLGIVDVAGHQ. A helical membrane pass occupies residues 276 to 296; that stretch reads IALNFSSLMFVLPMSLAAAVT. Residues 297–313 are Cytoplasmic-facing; the sequence is IRVGYRLGQGSTLDAQT. Residues 314 to 334 form a helical membrane-spanning segment; it reads AARTGLMVGVCMATLTAIFTV. Residues 335-349 lie on the Extracellular side of the membrane; that stretch reads SLREQIALLYNDNPE. Residues 350–370 form a helical membrane-spanning segment; it reads VVTLAAHLMLLAAVYQISDSI. Topologically, residues 371-386 are cytoplasmic; sequence QVIGSGILRGYKDTRS. A helical membrane pass occupies residues 387 to 407; that stretch reads IFYITFTAYWVLGLPSGYILA. Residues 408–417 are Extracellular-facing; sequence LTDLVVEPMG. Residues 418–438 form a helical membrane-spanning segment; sequence PAGFWIGFIIGLTSAAIMMML. The Cytoplasmic portion of the chain corresponds to 439–457; sequence RMRFLQRMPSAIILQRASR.

It belongs to the multi antimicrobial extrusion (MATE) (TC 2.A.66.1) family. MdtK subfamily.

Its subcellular location is the cell inner membrane. In terms of biological role, multidrug efflux pump that functions probably as a Na(+)/drug antiporter. This is Multidrug resistance protein MdtK (mdtK) from Shigella flexneri.